A 256-amino-acid chain; its full sequence is Alcohol dehydrogenase (256 aa).

Serine 2 carries the post-translational modification N-acetylserine. Residues 12-41 and aspartate 65 each bind NAD(+); that span reads FVAGLGGIGLDTSKELLKRDLKNLVILDRI. Serine 140 is a binding site for substrate. Tyrosine 153 acts as the Proton acceptor in catalysis. An NAD(+)-binding site is contributed by lysine 157.

Belongs to the short-chain dehydrogenases/reductases (SDR) family. As to quaternary structure, homodimer.

The enzyme catalyses a primary alcohol + NAD(+) = an aldehyde + NADH + H(+). It catalyses the reaction a secondary alcohol + NAD(+) = a ketone + NADH + H(+). Inhibited by 2,2,2-trifluoroethanol and pyrazole. This is Alcohol dehydrogenase (Adh) from Drosophila melanogaster (Fruit fly).